The primary structure comprises 1327 residues: Kinectin (1327 aa).

The Cytoplasmic portion of the chain corresponds to 1–8 (MELYESTY). A helical; Signal-anchor for type II membrane protein transmembrane segment spans residues 9-29 (FIVLIPSVVITVIFLFFWLFM). At 30 to 1327 (KETLYDEVLA…EVNQQLTKET (1298 aa)) the chain is on the lumenal side. 2 disordered regions span residues 49-181 (STKT…EQDK) and 197-216 (LSHQ…GLSK). Asparagine 69 carries an N-linked (GlcNAc...) asparagine glycan. Basic and acidic residues-rich tracts occupy residues 73 to 86 (RESD…DFKL) and 111 to 135 (VRER…ESDA). A phosphoserine mark is found at serine 75 and serine 77. Positions 163–173 (LKKKAGQKKSK) are enriched in basic residues. Residues 329–1327 (ELSGLLHQLQ…EVNQQLTKET (999 aa)) adopt a coiled-coil conformation. N-linked (GlcNAc...) asparagine glycosylation is present at asparagine 1031. Serine 1060 is subject to Phosphoserine. Asparagine 1066 carries N-linked (GlcNAc...) asparagine glycosylation. Serine 1290 bears the Phosphoserine mark.

Belongs to the kinectin family. In terms of tissue distribution, expressed in all tissues examined including 12-day embryo, adult heart, brain, ovary, kidney, lung, small intestine, spleen, thymus and pancreas.

The protein localises to the endoplasmic reticulum membrane. Its function is as follows. Receptor for kinesin thus involved in kinesin-driven vesicle motility. Accumulates in integrin-based adhesion complexes (IAC) upon integrin aggregation by fibronectin. The sequence is that of Kinectin from Mus musculus (Mouse).